The sequence spans 599 residues: Membrane protein insertase YidC (599 aa).

Residues 6-26 (NYFIAIALSVVIVLAWQFLYM) form a helical membrane-spanning segment. Positions 35–78 (RAEEARQAQQQTTQQQPAPGAAPGATVEGAPPASSTQAAATATR) are disordered. A compositionally biased stretch (low complexity) spans 41 to 76 (QAQQQTTQQQPAPGAAPGATVEGAPPASSTQAAATA). The next 4 membrane-spanning stretches (helical) occupy residues 378-398 (FGVA…PLAS), 448-468 (WPML…YVTI), 501-521 (VPHF…MFLQ), and 536-556 (IFTW…AGLV).

The protein belongs to the OXA1/ALB3/YidC family. Type 1 subfamily. In terms of assembly, interacts with the Sec translocase complex via SecD. Specifically interacts with transmembrane segments of nascent integral membrane proteins during membrane integration.

The protein localises to the cell inner membrane. Its function is as follows. Required for the insertion and/or proper folding and/or complex formation of integral membrane proteins into the membrane. Involved in integration of membrane proteins that insert both dependently and independently of the Sec translocase complex, as well as at least some lipoproteins. Aids folding of multispanning membrane proteins. The chain is Membrane protein insertase YidC from Agrobacterium fabrum (strain C58 / ATCC 33970) (Agrobacterium tumefaciens (strain C58)).